Consider the following 156-residue polypeptide: Ribonuclease pancreatic (156 aa).

The first 28 residues, 1-28 (MALEKSLALLPLLVLVLLVLGWVQPSLG), serve as a signal peptide directing secretion. Residues 33–43 (AKKFQRQHMDS) show a composition bias toward basic and acidic residues. The interval 33–52 (AKKFQRQHMDSDGSPSSNPT) is disordered. Positions 35 and 38 each coordinate substrate. Residue His40 is the Proton acceptor of the active site. Cystine bridges form between Cys54/Cys112, Cys68/Cys123, Cys86/Cys138, and Cys93/Cys100. Residue Asn62 is glycosylated (N-linked (GlcNAc...) asparagine). Substrate contacts are provided by residues 69-73 (KPVNT), Lys94, and Arg113. An N-linked (GlcNAc...) asparagine glycan is attached at Asn116. His147 functions as the Proton donor in the catalytic mechanism.

It belongs to the pancreatic ribonuclease family. As to quaternary structure, monomer. Interacts with and forms tight 1:1 complexes with RNH1. Dimerization of two such complexes may occur. Interaction with RNH1 inhibits this protein.

The protein localises to the secreted. The catalysed reaction is an [RNA] containing cytidine + H2O = an [RNA]-3'-cytidine-3'-phosphate + a 5'-hydroxy-ribonucleotide-3'-[RNA].. The enzyme catalyses an [RNA] containing uridine + H2O = an [RNA]-3'-uridine-3'-phosphate + a 5'-hydroxy-ribonucleotide-3'-[RNA].. Functionally, endonuclease that catalyzes the cleavage of RNA on the 3' side of pyrimidine nucleotides. Acts on single-stranded and double-stranded RNA. In Saimiri sciureus (Common squirrel monkey), this protein is Ribonuclease pancreatic (RNASE1).